The following is a 118-amino-acid chain: Pterin-4-alpha-carbinolamine dehydratase (118 aa).

This sequence belongs to the pterin-4-alpha-carbinolamine dehydratase family.

The catalysed reaction is (4aS,6R)-4a-hydroxy-L-erythro-5,6,7,8-tetrahydrobiopterin = (6R)-L-erythro-6,7-dihydrobiopterin + H2O. In terms of biological role, involved in tetrahydrobiopterin biosynthesis. Seems to both prevent the formation of 7-pterins and accelerate the formation of quinonoid-BH2. May also have a positive regulatory role in the expression of phhA. The protein is Pterin-4-alpha-carbinolamine dehydratase (phhB) of Pseudomonas syringae pv. tomato (strain ATCC BAA-871 / DC3000).